A 149-amino-acid chain; its full sequence is D-aminoacyl-tRNA deacylase (149 aa).

Positions 137–138 match the Gly-cisPro motif, important for rejection of L-amino acids motif; that stretch reads GP.

It belongs to the DTD family. In terms of assembly, homodimer.

Its subcellular location is the cytoplasm. The enzyme catalyses glycyl-tRNA(Ala) + H2O = tRNA(Ala) + glycine + H(+). It carries out the reaction a D-aminoacyl-tRNA + H2O = a tRNA + a D-alpha-amino acid + H(+). An aminoacyl-tRNA editing enzyme that deacylates mischarged D-aminoacyl-tRNAs. Also deacylates mischarged glycyl-tRNA(Ala), protecting cells against glycine mischarging by AlaRS. Acts via tRNA-based rather than protein-based catalysis; rejects L-amino acids rather than detecting D-amino acids in the active site. By recycling D-aminoacyl-tRNA to D-amino acids and free tRNA molecules, this enzyme counteracts the toxicity associated with the formation of D-aminoacyl-tRNA entities in vivo and helps enforce protein L-homochirality. The polypeptide is D-aminoacyl-tRNA deacylase (Clostridium perfringens (strain ATCC 13124 / DSM 756 / JCM 1290 / NCIMB 6125 / NCTC 8237 / Type A)).